The sequence spans 166 residues: UPF0561 protein C2orf68 (166 aa).

The disordered stretch occupies residues 32 to 107 (NQIARDDYDK…SELEPSGHQL (76 aa)). Composition is skewed to basic and acidic residues over residues 34–49 (IARD…AAKE) and 73–85 (RHRD…RNPD). Positions 91-104 (ESSSSGGSELEPSG) are enriched in low complexity.

It belongs to the UPF0561 family.

In Homo sapiens (Human), this protein is UPF0561 protein C2orf68 (C2orf68).